The sequence spans 362 residues: Major capsid protein VP1 (362 aa).

The disordered stretch occupies residues 1–21; it reads MAPTKRKGSCPGAAPKKPKEP. Residues 5–19 carry the Bipartite nuclear localization signal motif; that stretch reads KRKGSCPGAAPKKPK. Residues 302 to 362 are C-terminal arm; that stretch reads ISFLLSDLIN…EFGQTTTRMQ (61 aa). Thr-338 bears the Phosphothreonine; by host mark.

It belongs to the polyomaviruses coat protein VP1 family. As to quaternary structure, homomultimer; disulfide-linked. The virus capsid is composed of 72 icosahedral units, each one composed of five disulfide-linked copies of VP1. Interacts with agnoprotein. Interacts with minor capsid proteins VP2 and VP3. Interacts with host HSPA8; this interaction probably participates in virus assembly. Interacts with host SP1; this interaction enhances the efficiency of viral packaging.

The protein localises to the virion. It is found in the host nucleus. It localises to the host endoplasmic reticulum. Its function is as follows. Forms an icosahedral capsid with a T=7 symmetry and a 40 nm diameter. The capsid is composed of 72 pentamers linked to each other by disulfide bonds and associated with VP2 or VP3 proteins. Binds to N-glycolylneuraminic analog of the ganglioside GM1 on the cell surface to provide virion attachment to target cell. Once attached, the virion is internalized by caveolin-mediated endocytosis and traffics to the endoplasmic reticulum. Inside the endoplasmic reticulum, the protein folding machinery isomerizes VP1 interpentamer disulfide bonds, thereby triggering initial uncoating. Next, the virion uses the endoplasmic reticulum-associated degradation machinery to probably translocate in the cytosol before reaching the nucleus. Nuclear entry of the viral DNA involves the selective exposure and importin recognition of VP2/Vp3 nuclear localization signal. The assembly takes place in the cell nucleus. Encapsulates the genomic DNA and participates in rearranging nucleosomes around the viral DNA. The viral progenies exit the cells by lytic release. This is Major capsid protein VP1 from Macaca (macaques).